The primary structure comprises 435 residues: C4-dicarboxylate transport protein (435 aa).

9 consecutive transmembrane segments (helical) span residues S4–G24, L44–M64, V76–V96, I142–F162, V184–M204, L222–A242, V289–L309, I326–V346, and I352–I372.

Belongs to the dicarboxylate/amino acid:cation symporter (DAACS) (TC 2.A.23) family.

The protein localises to the cell inner membrane. In terms of biological role, responsible for the transport of dicarboxylates such as succinate, fumarate, and malate from the periplasm across the membrane. The chain is C4-dicarboxylate transport protein from Salmonella paratyphi A (strain ATCC 9150 / SARB42).